The sequence spans 99 residues: Acylphosphatase-2 (99 aa).

S2 carries the N-acetylserine modification. The Acylphosphatase-like domain maps to 9–99 (SVDYEVFGRV…LEYSSFNIRY (91 aa)). Catalysis depends on residues R24 and N42. S93 carries the phosphoserine modification.

The protein belongs to the acylphosphatase family.

It catalyses the reaction an acyl phosphate + H2O = a carboxylate + phosphate + H(+). Its function is as follows. Its physiological role is not yet clear. The polypeptide is Acylphosphatase-2 (ACYP2) (Bos taurus (Bovine)).